A 623-amino-acid polypeptide reads, in one-letter code: Peptidoglycan D,D-transpeptidase MrdA (623 aa).

Residues 17-37 form a helical membrane-spanning segment; sequence VIVAFGVVVVCFGILIFNLYN. S326 (acyl-ester intermediate) is an active-site residue.

The protein belongs to the transpeptidase family. MrdA subfamily.

It is found in the cell inner membrane. It carries out the reaction Preferential cleavage: (Ac)2-L-Lys-D-Ala-|-D-Ala. Also transpeptidation of peptidyl-alanyl moieties that are N-acyl substituents of D-alanine.. It participates in cell wall biogenesis; peptidoglycan biosynthesis. In terms of biological role, catalyzes cross-linking of the peptidoglycan cell wall. This Salmonella typhimurium (strain SL1344) protein is Peptidoglycan D,D-transpeptidase MrdA.